Reading from the N-terminus, the 256-residue chain is Large ribosomal subunit protein uL2 (256 aa).

Positions 208 to 230 (EHPHGGGNHQHIGKASTVKRGTS) are disordered.

Belongs to the universal ribosomal protein uL2 family. In larvae tissues examined: gut, brain imaginal disk, salivary glands, fat body, muscles, epidermis and trachaea.

It is found in the cytoplasm. This is Large ribosomal subunit protein uL2 (RpL8) from Drosophila melanogaster (Fruit fly).